The primary structure comprises 202 residues: Probable chemoreceptor glutamine deamidase CheD 2 (202 aa).

The protein belongs to the CheD family.

It carries out the reaction L-glutaminyl-[protein] + H2O = L-glutamyl-[protein] + NH4(+). Its function is as follows. Probably deamidates glutamine residues to glutamate on methyl-accepting chemotaxis receptors (MCPs), playing an important role in chemotaxis. The sequence is that of Probable chemoreceptor glutamine deamidase CheD 2 from Shewanella oneidensis (strain ATCC 700550 / JCM 31522 / CIP 106686 / LMG 19005 / NCIMB 14063 / MR-1).